The sequence spans 360 residues: Methylthioribose-1-phosphate isomerase (360 aa).

The active-site Proton donor is Asp-246.

This sequence belongs to the eIF-2B alpha/beta/delta subunits family. MtnA subfamily.

The protein resides in the cytoplasm. It localises to the nucleus. It carries out the reaction 5-(methylsulfanyl)-alpha-D-ribose 1-phosphate = 5-(methylsulfanyl)-D-ribulose 1-phosphate. It functions in the pathway amino-acid biosynthesis; L-methionine biosynthesis via salvage pathway; L-methionine from S-methyl-5-thio-alpha-D-ribose 1-phosphate: step 1/6. In terms of biological role, catalyzes the interconversion of methylthioribose-1-phosphate (MTR-1-P) into methylthioribulose-1-phosphate (MTRu-1-P). The sequence is that of Methylthioribose-1-phosphate isomerase from Aedes aegypti (Yellowfever mosquito).